The sequence spans 299 residues: tRNA dimethylallyltransferase (299 aa).

Residue 13–20 (GPTASGKT) coordinates ATP. 15 to 20 (TASGKT) contributes to the substrate binding site. The interaction with substrate tRNA stretch occupies residues 38–41 (DSRQ).

The protein belongs to the IPP transferase family. In terms of assembly, monomer. Mg(2+) serves as cofactor.

The enzyme catalyses adenosine(37) in tRNA + dimethylallyl diphosphate = N(6)-dimethylallyladenosine(37) in tRNA + diphosphate. Its function is as follows. Catalyzes the transfer of a dimethylallyl group onto the adenine at position 37 in tRNAs that read codons beginning with uridine, leading to the formation of N6-(dimethylallyl)adenosine (i(6)A). The chain is tRNA dimethylallyltransferase from Prochlorococcus marinus (strain MIT 9301).